A 123-amino-acid chain; its full sequence is U11/U12 small nuclear ribonucleoprotein 25 kDa protein (123 aa).

Residues 32–123 enclose the Ubiquitin-like domain; that stretch reads MTVRVCKMDG…VSFIKKLRQK (92 aa).

In terms of assembly, component of the U11/U12 snRNPs that are part of the U12-type spliceosome.

It is found in the nucleus. The sequence is that of U11/U12 small nuclear ribonucleoprotein 25 kDa protein (SNRNP25) from Bos taurus (Bovine).